Consider the following 229-residue polypeptide: Acetylornithine aminotransferase (229 aa).

Residues 95–96 (GA) and F122 contribute to the pyridoxal 5'-phosphate site. Position 125 (R125) interacts with N(2)-acetyl-L-ornithine. Pyridoxal 5'-phosphate is bound at residue 208–211 (DEIQ).

Belongs to the class-III pyridoxal-phosphate-dependent aminotransferase family. ArgD subfamily. In terms of assembly, homodimer. Pyridoxal 5'-phosphate is required as a cofactor.

It localises to the cytoplasm. The catalysed reaction is N(2)-acetyl-L-ornithine + 2-oxoglutarate = N-acetyl-L-glutamate 5-semialdehyde + L-glutamate. The protein operates within amino-acid biosynthesis; L-arginine biosynthesis; N(2)-acetyl-L-ornithine from L-glutamate: step 4/4. In Bacillus amyloliquefaciens (Bacillus velezensis), this protein is Acetylornithine aminotransferase (argD).